Consider the following 129-residue polypeptide: NADH-quinone oxidoreductase subunit A (129 aa).

3 helical membrane passes run Leu-14–Val-34, Phe-67–Ala-87, and Gly-97–Ile-117.

It belongs to the complex I subunit 3 family. NDH-1 is composed of 14 different subunits. Subunits NuoA, H, J, K, L, M, N constitute the membrane sector of the complex.

The protein resides in the cell inner membrane. It catalyses the reaction a quinone + NADH + 5 H(+)(in) = a quinol + NAD(+) + 4 H(+)(out). In terms of biological role, NDH-1 shuttles electrons from NADH, via FMN and iron-sulfur (Fe-S) centers, to quinones in the respiratory chain. The immediate electron acceptor for the enzyme in this species is believed to be ubiquinone. Couples the redox reaction to proton translocation (for every two electrons transferred, four hydrogen ions are translocated across the cytoplasmic membrane), and thus conserves the redox energy in a proton gradient. This is NADH-quinone oxidoreductase subunit A from Rhodopseudomonas palustris (strain BisB18).